The primary structure comprises 423 residues: MIRFCPSCFALKRTAPVLNHTSRLGNYFNNTFSKFSVNRMSVSSYSSDASSTVMDESPPNGVTKSVSGKGPTAVVMMNMGGPSNLDEVGPFLERLFTDGDIIPLGYFQNSLGKFIAKRRTPKVQNHYSDIGGGSPILHWTRIQGSEMCKILDKKCPESAPHLPFVAFRYAPPLTEDMLDELKKANVSRAVAFSQYPQWSCATSGASLNELRRKLIEKGMEKDFEWSIVDRWPLQQGLINAFAENIEETLKTYPEDVRDDVVIVFSAHSLPMSQVAKGDPYVYEIAATSQAVMKRLNYKNKFVNAWQSKVGPLPWMSPATDFVIEQLGNRGQKNMILVPIAFTSDHIETLKELEDYIEDAKQKGITGVKRVSSINGSMTAIQGMADLVAEHLKAKVPYSRQFTQRCPGCTSESCAERINFFQDF.

The transit peptide at 1–40 directs the protein to the mitochondrion; it reads MIRFCPSCFALKRTAPVLNHTSRLGNYFNNTFSKFSVNRM. [2Fe-2S] cluster is bound at residue Cys-200. Asp-385 is a catalytic residue. Residues Cys-405, Cys-408, and Cys-413 each coordinate [2Fe-2S] cluster.

This sequence belongs to the ferrochelatase family. In terms of assembly, monomer. The cofactor is [2Fe-2S] cluster.

The protein resides in the mitochondrion inner membrane. Its subcellular location is the cytoplasm. It is found in the nucleus. It catalyses the reaction heme b + 2 H(+) = protoporphyrin IX + Fe(2+). It participates in porphyrin-containing compound metabolism; protoheme biosynthesis; protoheme from protoporphyrin-IX: step 1/1. Functionally, catalyzes the ferrous insertion into protoporphyrin IX. The polypeptide is Ferrochelatase, mitochondrial (hem15) (Schizosaccharomyces pombe (strain 972 / ATCC 24843) (Fission yeast)).